The sequence spans 349 residues: Core protein VP7 (349 aa).

N-linked (GlcNAc...) asparagine; by host glycosylation is found at N193 and N287.

The protein belongs to the orbivirus VP7 family. Homotrimer that assemble in a complex of 260 capsomers on an inner scaffold composed of VP3.

The protein localises to the virion. Functionally, the VP7 protein is one of the five proteins (with VP1, VP3, VP4, and VP6) which form the inner capsid of the virus. This Antilocapra americana (Pronghorn) protein is Core protein VP7 (Segment-7).